We begin with the raw amino-acid sequence, 672 residues long: MKTLKTLKIFIIICIASVSLASFAGFGESCSSLPTTSDGYLETDTAYGYIIRNIDMKDPRGNCNSAASSITFCFKNIEGSSSPCTIYNLNEGDSKKISDLSTDNNPDLGANPVLKDIVLTVKKWDNDLCLVMPTSRGPMPVACKSLSATPTPTPPDDENCNIGKSCYTGANYSQSLINFSGLAVQCLSETLNKVFFAGNSCSSQDQNSRITNLAAFSTFQGYLKRIIGAALILYTMFFAFNMALNKEYASTEKIALFVIKFLLVAYFSIGLGPLDFSGGQPTKENGMLKYGLPLLTGAAPDFAQMIFNAAGSRGLCQFDNSKYKDGYKFYGLWDAIDCRIGYYLGLDLLYNIDKNGVLGNSIGNGPGGNNTPIPNFDPDGKKDRPKDLSKAGALRFFAVMFGFFMAGNVIILAAGLVFSVIFLSILLYFITHYLVCMITIYVMTYISPIFIPMALFTRTKAYFDGWLKVCISCALQPAVVAGFIALLITMYDSAIFKNCEFLRYDYEKGDIRFSTFELRLPNGGADKCQESFGYKMLQYYAGEGWEEHLLILFPIKSIVKDVVSILAELLCVLVFSVIFYYFSKSIGRFASDLTNGPNMDAVTASPTKIVDLVKKGAAFLKDAAMASQGKPSVGDKPDVGGKRKEGEQQGGDSESGAGGGLADLASGSGGGK.

A signal peptide spans 1 to 24; sequence MKTLKTLKIFIIICIASVSLASFA. Transmembrane regions (helical) follow at residues 226-246, 254-274, 410-430, 436-456, 469-489, and 562-582; these read IIGAALILYTMFFAFNMALNK, IALFVIKFLLVAYFSIGLGPL, IILAAGLVFSVIFLSILLYFI, CMITIYVMTYISPIFIPMALF, VCISCALQPAVVAGFIALLIT, and VVSILAELLCVLVFSVIFYYF. Residues 626 to 672 form a disordered region; it reads ASQGKPSVGDKPDVGGKRKEGEQQGGDSESGAGGGLADLASGSGGGK. Over residues 633–647 the composition is skewed to basic and acidic residues; sequence VGDKPDVGGKRKEGE. Residues 656 to 672 are compositionally biased toward gly residues; that stretch reads GAGGGLADLASGSGGGK.

Belongs to the TrbL/VirB6 family.

The protein resides in the cell membrane. This is an uncharacterized protein from Rickettsia felis (strain ATCC VR-1525 / URRWXCal2) (Rickettsia azadi).